The sequence spans 129 residues: 8-oxo-dGTP diphosphatase (129 aa).

The region spanning Met-1 to Leu-129 is the Nudix hydrolase domain. 8-oxo-dGTP-binding positions include Arg-23, His-28, and Glu-34–Gly-37. Mg(2+) contacts are provided by Gly-37 and Glu-57. The Nudix box motif lies at Gly-38 to Gly-59. Asn-119 provides a ligand contact to 8-oxo-dGTP.

Belongs to the Nudix hydrolase family. In terms of assembly, monomer. Mg(2+) serves as cofactor.

It carries out the reaction 8-oxo-dGTP + H2O = 8-oxo-dGMP + diphosphate + H(+). It catalyses the reaction 8-oxo-GTP + H2O = 8-oxo-GMP + diphosphate + H(+). The catalysed reaction is 8-oxo-dGDP + H2O = 8-oxo-dGMP + phosphate + H(+). The enzyme catalyses 8-oxo-GDP + H2O = 8-oxo-GMP + phosphate + H(+). Specifically hydrolyzes both 8-oxo-deoxyguanosine triphosphate (8-oxo-dGTP) and 8-oxo-guanosine triphosphate (8-oxo-GTP) to the related monophosphates, thereby cleaning up the nucleotide pools and preventing misincorporation of 8-oxoGua into DNA and RNA. It prevents replicational errors by removing an oxidatively damaged form of guanine (8-oxo-dGTP) from DNA and the nucleotide pool. 8-oxo-dGTP can be inserted opposite dA and dC residues of template DNA with almost equal efficiency thus leading to A.T to G.C transversions. MutT may also ensure transcriptional fidelity, removing 8-oxo-GTP from the ribonucleotide triphosphate pool. However, due to the lower efficiency of RNA polymerase 8-oxo-GTP incorporation, MutT is probably not a major contributor to transcriptional fidelity. It also hydrolyzes 8-oxo-dGDP and 8-oxo-GDP to their monophosphate form. In vitro, can also use dGTP, dGDP and other various nucleoside di- and triphosphates, with much lower efficiency. Works cooperatively with MutM and MutY to prevent accumulation in the DNA of oxidized guanine residues. This Escherichia coli (strain K12) protein is 8-oxo-dGTP diphosphatase.